We begin with the raw amino-acid sequence, 350 residues long: Fe(2+) transport protein 2 (350 aa).

An N-terminal signal peptide occupies residues 1-21 (MATTKLVYILLILFTFTVSPA). Over 22–47 (ISTAPEHCDSGFDNPCINKAKALPLK) the chain is Extracellular. The chain crosses the membrane as a helical span at residues 48 to 68 (IVAIVAILTTSLIGVTSPLFS). Over 69 to 80 (RYISFLRPDGNG) the chain is Cytoplasmic. A helical transmembrane segment spans residues 81–101 (FMIVKCFSSGIILGTGFMHVL). The Extracellular segment spans residues 102 to 120 (PDSFEMLSSKCLSDNPWHK). Residues 121–141 (FPFAGFVAMMSGLVTLAIDSI) form a helical membrane-spanning segment. The Cytoplasmic segment spans residues 142-195 (TTSLYTGKNSVGPVPDEEYGIDQEKAIHMVGHNHSHGHGVVLATKDDGQLLRYQ). The helical transmembrane segment at 196–216 (VIAMVLEVGILFHSVVIGLSL) threads the bilayer. Topologically, residues 217–227 (GATNDSCTIKG) are extracellular. A helical membrane pass occupies residues 228-248 (LIIALCFHHLFEGIGLGGCIL). The Cytoplasmic segment spans residues 249 to 257 (QADFTNVKK). Residues 258-278 (FLMAFFFTGTTPCGIFLGIAL) form a helical membrane-spanning segment. Residues 279–289 (SSIYRDNSPTA) lie on the Extracellular side of the membrane. The chain crosses the membrane as a helical span at residues 290–310 (LITIGLLNACSAGMLIYMALV). The Cytoplasmic portion of the chain corresponds to 311–329 (DLLATEFMGSMLQGSIKLQ). The helical transmembrane segment at 330 to 350 (IKCFTAALLGCAVMSVVAVWA) threads the bilayer.

It belongs to the ZIP transporter (TC 2.A.5) family. Expressed in the external cell layers of the root subapical zone.

Its subcellular location is the cell membrane. High-affinity iron transporter that mediates under iron-deficiency the iron uptake from the rhizosphere across the plasma membrane in the root epidermal layer. Could also be capable of transporting zinc ions. The protein is Fe(2+) transport protein 2 (IRT2) of Arabidopsis thaliana (Mouse-ear cress).